A 544-amino-acid chain; its full sequence is Phosphomannomutase (544 aa).

S145 functions as the Phosphoserine intermediate in the catalytic mechanism. Mg(2+)-binding residues include S145, D297, D299, and D301.

This sequence belongs to the phosphohexose mutase family. It depends on Mg(2+) as a cofactor.

It catalyses the reaction alpha-D-mannose 1-phosphate = D-mannose 6-phosphate. The chain is Phosphomannomutase (manB) from Mycoplasmoides pirum (Mycoplasma pirum).